Consider the following 111-residue polypeptide: Aspartate 1-decarboxylase (111 aa).

Ser25 acts as the Schiff-base intermediate with substrate; via pyruvic acid in catalysis. Residue Ser25 is modified to Pyruvic acid (Ser). Thr57 contributes to the substrate binding site. Tyr58 (proton donor) is an active-site residue. 73–75 (GPA) is a binding site for substrate.

This sequence belongs to the PanD family. In terms of assembly, heterooctamer of four alpha and four beta subunits. Requires pyruvate as cofactor. Is synthesized initially as an inactive proenzyme, which is activated by self-cleavage at a specific serine bond to produce a beta-subunit with a hydroxyl group at its C-terminus and an alpha-subunit with a pyruvoyl group at its N-terminus.

It localises to the cytoplasm. The enzyme catalyses L-aspartate + H(+) = beta-alanine + CO2. It functions in the pathway cofactor biosynthesis; (R)-pantothenate biosynthesis; beta-alanine from L-aspartate: step 1/1. Catalyzes the pyruvoyl-dependent decarboxylation of aspartate to produce beta-alanine. The polypeptide is Aspartate 1-decarboxylase (Francisella tularensis subsp. novicida (strain U112)).